The sequence spans 438 residues: Putative F-box protein At5g15660 (438 aa).

Positions 1–24 (MRRRSKKIKTENNSNPETSEERNK) are disordered. In terms of domain architecture, F-box spans 22-68 (RNKFDEIPHDLVIEILERLPLKSVARFLTVSKLWATTIRSPDFRKSY).

The sequence is that of Putative F-box protein At5g15660 from Arabidopsis thaliana (Mouse-ear cress).